The sequence spans 299 residues: Nucleotide-binding protein SAV_6292 (299 aa).

23 to 30 (GMSGAGRS) contacts ATP. Position 74–77 (74–77 (DVRG)) interacts with GTP.

The protein belongs to the RapZ-like family.

Displays ATPase and GTPase activities. The chain is Nucleotide-binding protein SAV_6292 from Streptomyces avermitilis (strain ATCC 31267 / DSM 46492 / JCM 5070 / NBRC 14893 / NCIMB 12804 / NRRL 8165 / MA-4680).